The chain runs to 463 residues: NADH dehydrogenase [ubiquinone] iron-sulfur protein 2, mitochondrial (463 aa).

Residues 1-33 (MAALRALCRLRGAAAQVLRPGAGVRLPIQPSRG) constitute a mitochondrion transit peptide. N6-acetyllysine is present on K62. R118 carries the post-translational modification Symmetric dimethylarginine. The [4Fe-4S] cluster site is built by C326, C332, and C347.

Belongs to the complex I 49 kDa subunit family. In terms of assembly, core subunit of respiratory chain NADH dehydrogenase (Complex I) which is composed of 45 different subunits. Component of the iron-sulfur (IP) fragment of the enzyme. Interacts with NDUFAF3. Interacts with NDUFAF7. Interacts with CERS2. The cofactor is [4Fe-4S] cluster. Post-translationally, dimethylation at Arg-118 by NDUFAF7 takes place after NDUFS2 assembles into the complex I, leading to stabilize the early intermediate complex.

The protein localises to the mitochondrion inner membrane. The enzyme catalyses a ubiquinone + NADH + 5 H(+)(in) = a ubiquinol + NAD(+) + 4 H(+)(out). Its function is as follows. Core subunit of the mitochondrial membrane respiratory chain NADH dehydrogenase (Complex I) which catalyzes electron transfer from NADH through the respiratory chain, using ubiquinone as an electron acceptor. Essential for the catalytic activity and assembly of complex I. Redox-sensitive, critical component of the oxygen-sensing pathway in the pulmonary vasculature which plays a key role in acute pulmonary oxygen-sensing and hypoxic pulmonary vasoconstriction. Plays an important role in carotid body sensing of hypoxia. Essential for glia-like neural stem and progenitor cell proliferation, differentiation and subsequent oligodendrocyte or neuronal maturation. In Bos taurus (Bovine), this protein is NADH dehydrogenase [ubiquinone] iron-sulfur protein 2, mitochondrial (NDUFS2).